Reading from the N-terminus, the 487-residue chain is Cobyric acid synthase (487 aa).

In terms of domain architecture, GATase cobBQ-type spans 249 to 435 (GIDIAIVRLP…IHGIFDEGDF (187 aa)). Cys-330 serves as the catalytic Nucleophile. His-427 is a catalytic residue.

This sequence belongs to the CobB/CobQ family. CobQ subfamily.

The protein operates within cofactor biosynthesis; adenosylcobalamin biosynthesis. In terms of biological role, catalyzes amidations at positions B, D, E, and G on adenosylcobyrinic A,C-diamide. NH(2) groups are provided by glutamine, and one molecule of ATP is hydrogenolyzed for each amidation. This chain is Cobyric acid synthase, found in Clostridium perfringens (strain ATCC 13124 / DSM 756 / JCM 1290 / NCIMB 6125 / NCTC 8237 / Type A).